Consider the following 305-residue polypeptide: Cell division control protein 2 homolog C (305 aa).

A Protein kinase domain is found at 4–297 (YEKLEKVGEG…AKAALDHPYF (294 aa)). ATP-binding positions include 10–18 (VGEGTYGKV) and Lys-33. At Thr-14 the chain carries Phosphothreonine. Tyr-15 bears the Phosphotyrosine mark. The active-site Proton acceptor is the Asp-138. The residue at position 172 (Thr-172) is a Phosphothreonine; by CAK.

Belongs to the protein kinase superfamily. CMGC Ser/Thr protein kinase family. CDC2/CDKX subfamily.

The enzyme catalyses L-seryl-[protein] + ATP = O-phospho-L-seryl-[protein] + ADP + H(+). It carries out the reaction L-threonyl-[protein] + ATP = O-phospho-L-threonyl-[protein] + ADP + H(+). It catalyses the reaction [DNA-directed RNA polymerase] + ATP = phospho-[DNA-directed RNA polymerase] + ADP + H(+). Plays a key role in the control of the eukaryotic cell cycle. The protein is Cell division control protein 2 homolog C (CDC2C) of Antirrhinum majus (Garden snapdragon).